A 590-amino-acid polypeptide reads, in one-letter code: UvrABC system protein C (590 aa).

In terms of domain architecture, GIY-YIG spans 15–98 (AEPGVYQFVA…VKRHQPRYNV (84 aa)). The UVR domain maps to 207-242 (GALADPLRREMAAAAQAEAFERAANLRDRLAVVEGF).

This sequence belongs to the UvrC family. Interacts with UvrB in an incision complex.

It localises to the cytoplasm. In terms of biological role, the UvrABC repair system catalyzes the recognition and processing of DNA lesions. UvrC both incises the 5' and 3' sides of the lesion. The N-terminal half is responsible for the 3' incision and the C-terminal half is responsible for the 5' incision. This chain is UvrABC system protein C, found in Halobacterium salinarum (strain ATCC 29341 / DSM 671 / R1).